The following is a 250-amino-acid chain: uncharacterized protein (250 aa).

NAD(+) contacts are provided by Ser15, Leu17, Asp36, Asp56, Val57, and Cys82. Ser143 serves as a coordination point for substrate. The NAD(+) site is built by Tyr156, Lys160, Phe189, and Thr191. Tyr156 acts as the Proton acceptor in catalysis.

This sequence belongs to the short-chain dehydrogenases/reductases (SDR) family.

This is an uncharacterized protein from Mycobacterium tuberculosis (strain CDC 1551 / Oshkosh).